Here is a 721-residue protein sequence, read N- to C-terminus: 1,4-alpha-glucan branching enzyme GlgB (721 aa).

Asp400 functions as the Nucleophile in the catalytic mechanism. Glu453 acts as the Proton donor in catalysis.

The protein belongs to the glycosyl hydrolase 13 family. GlgB subfamily. As to quaternary structure, monomer.

It carries out the reaction Transfers a segment of a (1-&gt;4)-alpha-D-glucan chain to a primary hydroxy group in a similar glucan chain.. Its pathway is glycan biosynthesis; glycogen biosynthesis. Functionally, catalyzes the formation of the alpha-1,6-glucosidic linkages in glycogen by scission of a 1,4-alpha-linked oligosaccharide from growing alpha-1,4-glucan chains and the subsequent attachment of the oligosaccharide to the alpha-1,6 position. The protein is 1,4-alpha-glucan branching enzyme GlgB of Chlamydia abortus (strain DSM 27085 / S26/3) (Chlamydophila abortus).